A 297-amino-acid polypeptide reads, in one-letter code: UPF0761 membrane protein VC0395_A2314/VC395_2854 (297 aa).

The next 6 membrane-spanning stretches (helical) occupy residues 43-63 (LLSMVPMLTVLLSILSSFALF), 100-120 (MTAVGGAFLFVAAIMLISNID), 135-155 (AVFSFSMYWMILTLGPILVGA), 181-201 (FLRWLPFVLSYCAFVGLYLLV), 213-233 (LGALIAAILFELSKKGFAAYI), and 245-265 (ALAAIPILFVWVYLCWLIVLV).

It belongs to the UPF0761 family.

It is found in the cell inner membrane. In Vibrio cholerae serotype O1 (strain ATCC 39541 / Classical Ogawa 395 / O395), this protein is UPF0761 membrane protein VC0395_A2314/VC395_2854.